The chain runs to 350 residues: Uroporphyrinogen decarboxylase (350 aa).

Substrate-binding positions include 27 to 31 (RQAGR), Phe46, Asp76, Tyr152, Ser207, and His321.

This sequence belongs to the uroporphyrinogen decarboxylase family. Homodimer.

It is found in the cytoplasm. It catalyses the reaction uroporphyrinogen III + 4 H(+) = coproporphyrinogen III + 4 CO2. Its pathway is porphyrin-containing compound metabolism; protoporphyrin-IX biosynthesis; coproporphyrinogen-III from 5-aminolevulinate: step 4/4. Its function is as follows. Catalyzes the decarboxylation of four acetate groups of uroporphyrinogen-III to yield coproporphyrinogen-III. The polypeptide is Uroporphyrinogen decarboxylase (Listeria innocua serovar 6a (strain ATCC BAA-680 / CLIP 11262)).